A 336-amino-acid polypeptide reads, in one-letter code: 4-hydroxy-3-methylbut-2-enyl diphosphate reductase (336 aa).

C21 contributes to the [4Fe-4S] cluster binding site. (2E)-4-hydroxy-3-methylbut-2-enyl diphosphate is bound by residues H50 and H86. The dimethylallyl diphosphate site is built by H50 and H86. The isopentenyl diphosphate site is built by H50 and H86. A [4Fe-4S] cluster-binding site is contributed by C108. H136 serves as a coordination point for (2E)-4-hydroxy-3-methylbut-2-enyl diphosphate. A dimethylallyl diphosphate-binding site is contributed by H136. H136 provides a ligand contact to isopentenyl diphosphate. E138 functions as the Proton donor in the catalytic mechanism. T177 contributes to the (2E)-4-hydroxy-3-methylbut-2-enyl diphosphate binding site. [4Fe-4S] cluster is bound at residue C207. (2E)-4-hydroxy-3-methylbut-2-enyl diphosphate-binding residues include S235, S236, N237, and S280. The dimethylallyl diphosphate site is built by S235, S236, N237, and S280. S235, S236, N237, and S280 together coordinate isopentenyl diphosphate.

Belongs to the IspH family. [4Fe-4S] cluster serves as cofactor.

The enzyme catalyses isopentenyl diphosphate + 2 oxidized [2Fe-2S]-[ferredoxin] + H2O = (2E)-4-hydroxy-3-methylbut-2-enyl diphosphate + 2 reduced [2Fe-2S]-[ferredoxin] + 2 H(+). It catalyses the reaction dimethylallyl diphosphate + 2 oxidized [2Fe-2S]-[ferredoxin] + H2O = (2E)-4-hydroxy-3-methylbut-2-enyl diphosphate + 2 reduced [2Fe-2S]-[ferredoxin] + 2 H(+). Its pathway is isoprenoid biosynthesis; dimethylallyl diphosphate biosynthesis; dimethylallyl diphosphate from (2E)-4-hydroxy-3-methylbutenyl diphosphate: step 1/1. It functions in the pathway isoprenoid biosynthesis; isopentenyl diphosphate biosynthesis via DXP pathway; isopentenyl diphosphate from 1-deoxy-D-xylulose 5-phosphate: step 6/6. Its function is as follows. Catalyzes the conversion of 1-hydroxy-2-methyl-2-(E)-butenyl 4-diphosphate (HMBPP) into a mixture of isopentenyl diphosphate (IPP) and dimethylallyl diphosphate (DMAPP). Acts in the terminal step of the DOXP/MEP pathway for isoprenoid precursor biosynthesis. This is 4-hydroxy-3-methylbut-2-enyl diphosphate reductase from Mesorhizobium japonicum (strain LMG 29417 / CECT 9101 / MAFF 303099) (Mesorhizobium loti (strain MAFF 303099)).